A 396-amino-acid polypeptide reads, in one-letter code: Glyceraldehyde-3-phosphate dehydrogenase GAPA1, chloroplastic (396 aa).

The N-terminal 60 residues, 1–60 (MASVTFSVPKGFTEFSGLRSSSASLPFGKKLSSDEFVSIVSFQTSAMGSSGGYRKGVTEA), are a transit peptide targeting the chloroplast. Residues 71–72 (RI), D95, and R140 contribute to the NADP(+) site. D-glyceraldehyde 3-phosphate is bound by residues 212–214 (SCT), T243, R258, 271–272 (TG), and R294. C213 functions as the Nucleophile in the catalytic mechanism. N376 provides a ligand contact to NADP(+).

This sequence belongs to the glyceraldehyde-3-phosphate dehydrogenase family. As to quaternary structure, tetramer of either four A chains (GAPDH 2) or two A and two B chains (GAPDH 1). As to expression, expressed in leaves and stems.

Its subcellular location is the plastid. The protein localises to the chloroplast membrane. The protein resides in the chloroplast stroma. It carries out the reaction D-glyceraldehyde 3-phosphate + phosphate + NADP(+) = (2R)-3-phospho-glyceroyl phosphate + NADPH + H(+). It participates in carbohydrate biosynthesis; Calvin cycle. Functionally, involved in the photosynthetic reductive pentose phosphate pathway (Calvin-Benson cycle). Catalyzes the reduction of 1,3-diphosphoglycerate by NADPH. The chain is Glyceraldehyde-3-phosphate dehydrogenase GAPA1, chloroplastic (GAPA1) from Arabidopsis thaliana (Mouse-ear cress).